A 279-amino-acid polypeptide reads, in one-letter code: Large ribosomal subunit protein uL2 (279 aa).

Disordered stretches follow at residues 34–55 and 221–279; these read LAPL…RHKG and RGMA…RKAK. A compositionally biased stretch (basic residues) spans 40–55; sequence SGGRNRAGRITSRHKG. The segment covering 232-242 has biased composition (gly residues); sequence MGGGEGRSKSG. The segment covering 259-279 has biased composition (basic residues); sequence LKTRNKKKASSKLIVRGRKAK.

The protein belongs to the universal ribosomal protein uL2 family. In terms of assembly, part of the 50S ribosomal subunit. Forms a bridge to the 30S subunit in the 70S ribosome.

Functionally, one of the primary rRNA binding proteins. Required for association of the 30S and 50S subunits to form the 70S ribosome, for tRNA binding and peptide bond formation. It has been suggested to have peptidyltransferase activity; this is somewhat controversial. Makes several contacts with the 16S rRNA in the 70S ribosome. The protein is Large ribosomal subunit protein uL2 of Chlorobium phaeobacteroides (strain BS1).